Reading from the N-terminus, the 484-residue chain is Regulator of G-protein signaling 9 (484 aa).

The DEP domain occupies 30–105; it reads PDTGVKTQSQ…PDSSLYRFQT (76 aa). In terms of domain architecture, G protein gamma spans 219 to 280; it reads ITAVKKEIMY…ITDDTQFWDL (62 aa). One can recognise an RGS domain in the interval 299–414; sequence NFSELIRDPK…LKSPIYKEML (116 aa).

As to quaternary structure, heterodimer with Gbeta5. Interacts with RGS7BP, leading to regulate the subcellular location of the heterodimer formed with Gbeta5. Component of the RGS9-1-Gbeta5 complex composed of RGS9 (RGS9-1), Gbeta5 (GNB5) and RGS9BP. In terms of processing, phosphorylation is decreased by light exposition.

The protein resides in the membrane. Functionally, inhibits signal transduction by increasing the GTPase activity of G protein alpha subunits thereby driving them into their inactive GDP-bound form. Binds to G(t)-alpha. Involved in phototransduction; key element in the recovery phase of visual transduction. The chain is Regulator of G-protein signaling 9 from Tamias striatus (Eastern chipmunk).